A 174-amino-acid polypeptide reads, in one-letter code: Protein GrpE (174 aa).

The interval 1-35 (MAQDIKNEEVEEVQEEEVVETAEETTPEKSELDLA) is disordered. Acidic residues predominate over residues 9-25 (EVEEVQEEEVVETAEET). Positions 26-35 (TPEKSELDLA) are enriched in basic and acidic residues.

The protein belongs to the GrpE family. As to quaternary structure, homodimer.

It localises to the cytoplasm. Its function is as follows. Participates actively in the response to hyperosmotic and heat shock by preventing the aggregation of stress-denatured proteins, in association with DnaK and GrpE. It is the nucleotide exchange factor for DnaK and may function as a thermosensor. Unfolded proteins bind initially to DnaJ; upon interaction with the DnaJ-bound protein, DnaK hydrolyzes its bound ATP, resulting in the formation of a stable complex. GrpE releases ADP from DnaK; ATP binding to DnaK triggers the release of the substrate protein, thus completing the reaction cycle. Several rounds of ATP-dependent interactions between DnaJ, DnaK and GrpE are required for fully efficient folding. This Streptococcus pneumoniae (strain ATCC BAA-255 / R6) protein is Protein GrpE.